Reading from the N-terminus, the 452-residue chain is Probable receptor-like protein kinase At5g20050 (452 aa).

The signal sequence occupies residues 1–23 (MEDKKANIIATILILALVVVIIA). At 24 to 33 (ARVSLKLSKT) the chain is on the extracellular side. The chain crosses the membrane as a helical span at residues 34 to 54 (FYLIAGVDISLILAVICFLII). Residues 55–452 (RSRYNKERKL…SSIISPISPR (398 aa)) lie on the Cytoplasmic side of the membrane. One can recognise a Protein kinase domain in the interval 103–392 (DGFRSLIGKG…MVIEMLEGRV (290 aa)). ATP contacts are provided by residues 109–117 (IGKGGSGSV) and K131. Phosphotyrosine is present on Y178. Catalysis depends on D236, which acts as the Proton acceptor. Phosphothreonine is present on residues T270 and T275.

It belongs to the protein kinase superfamily. Ser/Thr protein kinase family.

The protein resides in the membrane. The catalysed reaction is L-seryl-[protein] + ATP = O-phospho-L-seryl-[protein] + ADP + H(+). It carries out the reaction L-threonyl-[protein] + ATP = O-phospho-L-threonyl-[protein] + ADP + H(+). This chain is Probable receptor-like protein kinase At5g20050, found in Arabidopsis thaliana (Mouse-ear cress).